A 670-amino-acid polypeptide reads, in one-letter code: MEMRGIENKSDIALAEFRLTGINGPDKDSSGSTYPDAAAVEAKYEAERQIQLRAHETVSDIEITVDDGWTDLAQDPWAGCPDPAGETPHLLTQRSHLLSQHRHRVLIVGAGFGGLLFAVRLLQTGQFKASDIVIADTAAGFGGTWYWNRYPGLMCDTESYIYMPLLEETGYMPRDKYASGSEIRQHAERIARYWGLETRAMFRTSVRDLAWDEDKKIWNVAGRLLGDVMDTEQFRMAADIVLLASGSFASPRVPNYPDIAKYKGKLFHTARWDYQFTGGSLENPKLTGLADKRVGIIGTGASAVQIIPHLARYSRSLIVFQRTPAAVDARDNRPTDPVWWKEEMASQGAGWQQRRQKNFNAFTCNETPLPGNNCVGDGWTRMPSFSLLIGGPQNLAPDYIDQMRAVDLVRQAQIRERAHALVQDPVAADLLTPWYPGWCKRPCFHDDYLSALNEENVRLVDLRHGGLSHFTPSGVVANGEEYELDLIVLSTGYTVPVTRASPGSRGNISITGRNGMTMEAKWANGLATLHGVMTRDLPNLFFAGTSQAGACVNLTYSVDQNATHVAYILGKAFERRPPNCDKVVLQPTHEGEEQWAGEVLARAAAFRGIAGCTPGYLNGYGKSLDSLSPEQQVNMARLAAWGEGIASYVNRLEEWREKGELEGVEMTFLN.

FAD-binding positions include 144–147 (TWYW), 156–157 (DT), and Tyr-162. 154–156 (MCD) is a binding site for NADP(+). Residues 299 to 305 (TGASAVQ) and 322 to 323 (RT) contribute to the NADP(+) site.

The protein belongs to the FAD-binding monooxygenase family. The cofactor is FAD.

It catalyses the reaction preaustinoid A + AH2 + O2 = preaustinoid A1 + A + H2O. The protein operates within secondary metabolite biosynthesis; terpenoid biosynthesis. In terms of biological role, FAD-binding monooxygenase; part of the gene cluster that mediates the biosynthesis of calidodehydroaustin, a fungal meroterpenoid. The first step of the pathway is the synthesis of 3,5-dimethylorsellinic acid by the polyketide synthase ausA. 3,5-dimethylorsellinic acid is then prenylated by the polyprenyl transferase ausN. Further epoxidation by the FAD-dependent monooxygenase ausM and cyclization by the probable terpene cyclase ausL lead to the formation of protoaustinoid A. Protoaustinoid A is then oxidized to spiro-lactone preaustinoid A3 by the combined action of the FAD-binding monooxygenases ausB and ausC, and the dioxygenase ausE. Acid-catalyzed keto-rearrangement and ring contraction of the tetraketide portion of preaustinoid A3 by ausJ lead to the formation of preaustinoid A4. The aldo-keto reductase ausK, with the help of ausH, is involved in the next step by transforming preaustinoid A4 into isoaustinone which is in turn hydroxylated by the P450 monooxygenase ausI to form austinolide. The cytochrome P450 monooxygenase ausG modifies austinolide to austinol. Austinol is further acetylated to austin by the O-acetyltransferase ausP, which spontaneously changes to dehydroaustin. The cytochrome P450 monooxygenase ausR then converts dehydroaustin is into 7-dehydrodehydroaustin. The hydroxylation catalyzed by ausR permits the O-acetyltransferase ausQ to add an additional acetyl group to the molecule, leading to the formation of acetoxydehydroaustin. The short chain dehydrogenase ausT catalyzes the reduction of the double bond present between carbon atoms 1 and 2 to convert 7-dehydrodehydroaustin into 1,2-dihydro-7-hydroxydehydroaustin. AusQ catalyzes not only an acetylation reaction but also the addition of the PKS ausV diketide product to 1,2-dihydro-7-hydroxydehydroaustin, forming precalidodehydroaustin. Finally, the iron/alpha-ketoglutarate-dependent dioxygenase converts precalidodehydroaustin into calidodehydroaustin. The protein is FAD-binding monooxygenase ausC of Aspergillus calidoustus.